We begin with the raw amino-acid sequence, 671 residues long: DNA ligase (671 aa).

NAD(+)-binding positions include 32 to 36, 81 to 82, and Glu113; these read DAEYD and SL. Lys115 acts as the N6-AMP-lysine intermediate in catalysis. NAD(+)-binding residues include Arg136, Glu173, Lys290, and Lys314. Residues Cys408, Cys411, Cys426, and Cys432 each coordinate Zn(2+). One can recognise a BRCT domain in the interval 593 to 671; it reads EIDSPFAGKT…EAEMIRLLGA (79 aa).

This sequence belongs to the NAD-dependent DNA ligase family. LigA subfamily. Requires Mg(2+) as cofactor. Mn(2+) is required as a cofactor.

The enzyme catalyses NAD(+) + (deoxyribonucleotide)n-3'-hydroxyl + 5'-phospho-(deoxyribonucleotide)m = (deoxyribonucleotide)n+m + AMP + beta-nicotinamide D-nucleotide.. Functionally, DNA ligase that catalyzes the formation of phosphodiester linkages between 5'-phosphoryl and 3'-hydroxyl groups in double-stranded DNA using NAD as a coenzyme and as the energy source for the reaction. It is essential for DNA replication and repair of damaged DNA. The polypeptide is DNA ligase (Salmonella dublin (strain CT_02021853)).